The chain runs to 107 residues: Integration host factor subunit beta (107 aa).

Residues Asn54–Gln107 are disordered. A compositionally biased stretch (basic and acidic residues) spans Lys65–Asp101.

Belongs to the bacterial histone-like protein family. In terms of assembly, heterodimer of an alpha and a beta chain.

This protein is one of the two subunits of integration host factor, a specific DNA-binding protein that functions in genetic recombination as well as in transcriptional and translational control. This is Integration host factor subunit beta from Burkholderia thailandensis (strain ATCC 700388 / DSM 13276 / CCUG 48851 / CIP 106301 / E264).